Reading from the N-terminus, the 396-residue chain is Elongation factor Tu 1 (396 aa).

One can recognise a tr-type G domain in the interval 10 to 206; sequence KPHCNVGTIG…AVDDYIPQPE (197 aa). The interval 19 to 26 is G1; that stretch reads GHVDHGKT. Residue 19 to 26 coordinates GTP; that stretch reads GHVDHGKT. Residue Thr-26 participates in Mg(2+) binding. Residues 60 to 64 form a G2 region; the sequence is GITIS. A G3 region spans residues 81 to 84; the sequence is DCPG. GTP is bound by residues 81 to 85 and 136 to 139; these read DCPGH and NKCD. Positions 136–139 are G4; that stretch reads NKCD. The tract at residues 174–176 is G5; sequence SAL.

It belongs to the TRAFAC class translation factor GTPase superfamily. Classic translation factor GTPase family. EF-Tu/EF-1A subfamily. Monomer.

It localises to the cytoplasm. The catalysed reaction is GTP + H2O = GDP + phosphate + H(+). GTP hydrolase that promotes the GTP-dependent binding of aminoacyl-tRNA to the A-site of ribosomes during protein biosynthesis. The sequence is that of Elongation factor Tu 1 from Rhodospirillum rubrum (strain ATCC 11170 / ATH 1.1.1 / DSM 467 / LMG 4362 / NCIMB 8255 / S1).